Reading from the N-terminus, the 512-residue chain is Alpha-amylase 1 (512 aa).

The signal sequence occupies residues 1 to 25; sequence MRFSTEGFTSKVVAAILAFSRLVSA. A disulfide bridge links cysteine 66 with cysteine 74. Substrate is bound at residue tryptophan 119. Residue asparagine 157 coordinates Ca(2+). Histidine 158 contributes to the substrate binding site. Cysteine 186 and cysteine 200 are joined by a disulfide. Residues glutamate 198 and aspartate 211 each coordinate Ca(2+). Residue asparagine 233 is glycosylated (N-linked (GlcNAc...) asparagine). Residue arginine 240 coordinates substrate. Residues aspartate 242, histidine 246, and glutamate 266 each coordinate Ca(2+). The active-site Nucleophile is the aspartate 242. 245 to 246 is a substrate binding site; sequence KH. The Proton donor role is filled by glutamate 266. Glycine 270 lines the substrate pocket. Residues cysteine 276 and cysteine 319 are joined by a disulfide bond. 2 residues coordinate substrate: aspartate 333 and arginine 380. A disulfide bond links cysteine 475 and cysteine 510.

Belongs to the glycosyl hydrolase 13 family. Requires Ca(2+) as cofactor.

Its subcellular location is the secreted. The enzyme catalyses Endohydrolysis of (1-&gt;4)-alpha-D-glucosidic linkages in polysaccharides containing three or more (1-&gt;4)-alpha-linked D-glucose units.. Alpha-amylase expression underlies catabolite repression by glucose. This Schwanniomyces occidentalis (Yeast) protein is Alpha-amylase 1 (AMY1).